A 180-amino-acid polypeptide reads, in one-letter code: Inner membrane-spanning protein YciB (180 aa).

The next 5 helical transmembrane spans lie at 22-42 (IYVA…LTWL), 50-70 (MTLI…VFHN), 76-96 (WKVT…QVVL), 121-141 (AAWA…AFWL), and 149-169 (FKVF…GIYI).

This sequence belongs to the YciB family.

It is found in the cell inner membrane. Plays a role in cell envelope biogenesis, maintenance of cell envelope integrity and membrane homeostasis. The polypeptide is Inner membrane-spanning protein YciB (Edwardsiella ictaluri (strain 93-146)).